Reading from the N-terminus, the 318-residue chain is Methionyl-tRNA formyltransferase (318 aa).

112 to 115 serves as a coordination point for (6S)-5,6,7,8-tetrahydrofolate; the sequence is SILP.

This sequence belongs to the Fmt family.

It catalyses the reaction L-methionyl-tRNA(fMet) + (6R)-10-formyltetrahydrofolate = N-formyl-L-methionyl-tRNA(fMet) + (6S)-5,6,7,8-tetrahydrofolate + H(+). Its function is as follows. Attaches a formyl group to the free amino group of methionyl-tRNA(fMet). The formyl group appears to play a dual role in the initiator identity of N-formylmethionyl-tRNA by promoting its recognition by IF2 and preventing the misappropriation of this tRNA by the elongation apparatus. This chain is Methionyl-tRNA formyltransferase, found in Shewanella oneidensis (strain ATCC 700550 / JCM 31522 / CIP 106686 / LMG 19005 / NCIMB 14063 / MR-1).